We begin with the raw amino-acid sequence, 336 residues long: Holliday junction branch migration complex subunit RuvB (336 aa).

The large ATPase domain (RuvB-L) stretch occupies residues 4 to 184; it reads ADRLISAGAT…FGIVQRLEFY (181 aa). ATP contacts are provided by residues isoleucine 23, arginine 24, glycine 65, lysine 68, threonine 69, threonine 70, 131–133, arginine 174, tyrosine 184, and arginine 221; that span reads EDY. Threonine 69 is a Mg(2+) binding site. A small ATPAse domain (RuvB-S) region spans residues 185–255; the sequence is QVPDLQHIVG…IAAQALDMLN (71 aa). The segment at 258–336 is head domain (RuvB-H); that stretch reads AEGFDYMDRK…HFGITPPEMP (79 aa). The DNA site is built by arginine 294, arginine 313, and arginine 318.

This sequence belongs to the RuvB family. As to quaternary structure, homohexamer. Forms an RuvA(8)-RuvB(12)-Holliday junction (HJ) complex. HJ DNA is sandwiched between 2 RuvA tetramers; dsDNA enters through RuvA and exits via RuvB. An RuvB hexamer assembles on each DNA strand where it exits the tetramer. Each RuvB hexamer is contacted by two RuvA subunits (via domain III) on 2 adjacent RuvB subunits; this complex drives branch migration. In the full resolvosome a probable DNA-RuvA(4)-RuvB(12)-RuvC(2) complex forms which resolves the HJ.

The protein resides in the cytoplasm. The enzyme catalyses ATP + H2O = ADP + phosphate + H(+). The RuvA-RuvB-RuvC complex processes Holliday junction (HJ) DNA during genetic recombination and DNA repair, while the RuvA-RuvB complex plays an important role in the rescue of blocked DNA replication forks via replication fork reversal (RFR). RuvA specifically binds to HJ cruciform DNA, conferring on it an open structure. The RuvB hexamer acts as an ATP-dependent pump, pulling dsDNA into and through the RuvAB complex. RuvB forms 2 homohexamers on either side of HJ DNA bound by 1 or 2 RuvA tetramers; 4 subunits per hexamer contact DNA at a time. Coordinated motions by a converter formed by DNA-disengaged RuvB subunits stimulates ATP hydrolysis and nucleotide exchange. Immobilization of the converter enables RuvB to convert the ATP-contained energy into a lever motion, pulling 2 nucleotides of DNA out of the RuvA tetramer per ATP hydrolyzed, thus driving DNA branch migration. The RuvB motors rotate together with the DNA substrate, which together with the progressing nucleotide cycle form the mechanistic basis for DNA recombination by continuous HJ branch migration. Branch migration allows RuvC to scan DNA until it finds its consensus sequence, where it cleaves and resolves cruciform DNA. The polypeptide is Holliday junction branch migration complex subunit RuvB (Salmonella choleraesuis (strain SC-B67)).